A 700-amino-acid chain; its full sequence is Acyl-coenzyme A oxidase 2 (700 aa).

The protein belongs to the acyl-CoA oxidase family. In terms of assembly, heteropentamer composed of five different subunits. Requires FAD as cofactor.

It is found in the peroxisome. The enzyme catalyses a 2,3-saturated acyl-CoA + O2 = a (2E)-enoyl-CoA + H2O2. The protein operates within lipid metabolism; peroxisomal fatty acid beta-oxidation. Oxidizes strain chain acyl-CoAs with a chain length of 10 to 14 carbons. Also active toward the 2S isomers of acyl-CoA-esters containing a 2-methyl group. The sequence is that of Acyl-coenzyme A oxidase 2 (POX2) from Yarrowia lipolytica (strain CLIB 122 / E 150) (Yeast).